The primary structure comprises 394 residues: Elongation factor Tu (394 aa).

The tr-type G domain occupies 10–204 (KPHVNVGTIG…ALDTYIPEPE (195 aa)). Residues 19–26 (GHVDHGKT) are G1. 19–26 (GHVDHGKT) serves as a coordination point for GTP. Mg(2+) is bound at residue T26. Residues 60-64 (GITIA) form a G2 region. Residues 81–84 (DCPG) are G3. Residues 81 to 85 (DCPGH) and 136 to 139 (NKCD) each bind GTP. A G4 region spans residues 136-139 (NKCD). Positions 174-176 (SAL) are G5.

It belongs to the TRAFAC class translation factor GTPase superfamily. Classic translation factor GTPase family. EF-Tu/EF-1A subfamily. As to quaternary structure, monomer.

It localises to the cytoplasm. The catalysed reaction is GTP + H2O = GDP + phosphate + H(+). Its function is as follows. GTP hydrolase that promotes the GTP-dependent binding of aminoacyl-tRNA to the A-site of ribosomes during protein biosynthesis. The protein is Elongation factor Tu of Vibrio parahaemolyticus serotype O3:K6 (strain RIMD 2210633).